A 199-amino-acid polypeptide reads, in one-letter code: Protein extra-macrochaetae (199 aa).

A bHLH domain is found at 23–75 (RIQRHPTHRGDGENAEMKMYLSKLKDLVPFMPKNRKLTKLEIIQHVIDYICDL). The residue at position 106 (Ser106) is a Phosphoserine. The interval 127–199 (RLNAEQPAKV…QNAEKDSRQS (73 aa)) is disordered. Positions 161-182 (QQHQQQQQLQLQQQQLQSQQQL) are enriched in low complexity.

In terms of assembly, heterodimer with other HLH proteins.

The protein resides in the nucleus. Participates in sensory organ patterning by antagonizing the neurogenic activity of the Achaete-scute complex (AS-C). It lacks a basic DNA-binding domain but is able to form heterodimers with other HLH proteins, thereby inhibiting DNA binding. May sequester proneural proteins in complexes inefficient for DNA interaction. EMC also affects vein differentiation. Inhibits the activity of AS-C proteins by forming an non-DNA binding heterodimer. This is Protein extra-macrochaetae (emc) from Drosophila melanogaster (Fruit fly).